Reading from the N-terminus, the 215-residue chain is N-(5'-phosphoribosyl)anthranilate isomerase (215 aa).

Belongs to the TrpF family.

It carries out the reaction N-(5-phospho-beta-D-ribosyl)anthranilate = 1-(2-carboxyphenylamino)-1-deoxy-D-ribulose 5-phosphate. It functions in the pathway amino-acid biosynthesis; L-tryptophan biosynthesis; L-tryptophan from chorismate: step 3/5. This is N-(5'-phosphoribosyl)anthranilate isomerase from Cellvibrio japonicus (strain Ueda107) (Pseudomonas fluorescens subsp. cellulosa).